A 224-amino-acid polypeptide reads, in one-letter code: UPF0758 protein VP0184 (224 aa).

Residues 102-224 (ALTSPEQTKL…SVSFAERGWI (123 aa)) enclose the MPN domain. Zn(2+) contacts are provided by His173, His175, and Asp186. The JAMM motif motif lies at 173 to 186 (HNHPSGVAEPSQAD).

Belongs to the UPF0758 family.

The protein is UPF0758 protein VP0184 of Vibrio parahaemolyticus serotype O3:K6 (strain RIMD 2210633).